A 266-amino-acid polypeptide reads, in one-letter code: Undecaprenyl-diphosphatase (266 aa).

The next 8 membrane-spanning stretches (helical) occupy residues 4-24 (ILSAIILGIIQGITEFLPISS), 39-59 (LSIIFDIYLHLATVLVIIIYY), 86-106 (LKLILLILIITIVTGVVGTFI), 112-132 (MFTLSFVLINFIITGILILML), 145-165 (ILLAGIFMGLMQGLGALPGIS), 182-202 (KSAFEISFLSLIPIVFGAILL), 210-230 (IFMVLNFFEINLGALVAFVVG), and 246-266 (LYYFSIYLFALSIIVCYFVRI).

It belongs to the UppP family.

The protein localises to the cell inner membrane. It carries out the reaction di-trans,octa-cis-undecaprenyl diphosphate + H2O = di-trans,octa-cis-undecaprenyl phosphate + phosphate + H(+). Catalyzes the dephosphorylation of undecaprenyl diphosphate (UPP). Confers resistance to bacitracin. The chain is Undecaprenyl-diphosphatase from Borreliella burgdorferi (strain ATCC 35210 / DSM 4680 / CIP 102532 / B31) (Borrelia burgdorferi).